A 2022-amino-acid chain; its full sequence is Transient receptor potential cation channel subfamily M member 6 (2022 aa).

The Cytoplasmic portion of the chain corresponds to 1-741 (MKEQPVLERL…MWMGRLKMRK (741 aa)). A helical membrane pass occupies residues 742 to 762 (NSWLKIIISIILPPTILTLEF). At 763 to 841 (KSKAEMSHVP…YEFYSAPIVK (79 aa)) the chain is on the extracellular side. A helical transmembrane segment spans residues 842-862 (FWFYTMAYLAFLMLFTYTVLV). Topologically, residues 863 to 905 (EMQPQPSVQEWLVSIYIFTNAIEVVREICISEPGKFTQKVKVW) are cytoplasmic. The chain crosses the membrane as a helical span at residues 906–926 (ISEYWNLTETVAIGLFSAGFV). The Extracellular segment spans residues 927–939 (LRWGDPPFHTAGR). Residues 940-960 (LIYCIDIIFWFSRLLDFFAVN) traverse the membrane as a helical segment. The Cytoplasmic segment spans residues 961–972 (QHAGPYVTMIAK). Residues 973 to 993 (MTANMFYIVIIMAIVLLSFGV) form a helical membrane-spanning segment. Residues 994 to 1012 (ARKAILSPKEPPSWSLARD) lie on the Extracellular side of the membrane. The pore-forming intramembrane region spans 1013–1033 (IVFEPYWMIYGEVYAGEIDVC). The Extracellular segment spans residues 1034–1047 (SSQPSCPPGSFLTP). Residues 1048–1068 (FLQAVYLFVQYIIMVNLLIAF) traverse the membrane as a helical segment. Residues 1069 to 2022 (FNNVYLDMES…RNSPEDDMQL (954 aa)) are Cytoplasmic-facing. Residues 1479–1516 (TCDSDSSRSEQHQKQAQDSSLSDNSTRSAQSSECSEVG) are disordered. Basic and acidic residues predominate over residues 1483 to 1493 (DSSRSEQHQKQ). Polar residues predominate over residues 1494–1512 (AQDSSLSDNSTRSAQSSEC). Positions 1750–1980 (NLDKSMSSWS…CCRKLKLPDL (231 aa)) constitute an Alpha-type protein kinase domain. The ADP site is built by Gly1777, Gly1778, Leu1779, Arg1780, and Lys1804. Thr1851 carries the phosphothreonine; by autocatalysis modification. ADP contacts are provided by Glu1876 and Met1879. His1909 is a binding site for Zn(2+). Asp1923 functions as the Proton acceptor in the catalytic mechanism. Asp1933 serves as a coordination point for ADP. The Zn(2+) site is built by His1966, Cys1968, and Cys1972. The tract at residues 1997 to 2022 (EIKIESAEEPPARETGRNSPEDDMQL) is disordered. The segment covering 1998–2016 (IKIESAEEPPARETGRNSP) has biased composition (basic and acidic residues).

In the C-terminal section; belongs to the protein kinase superfamily. Alpha-type protein kinase family. ALPK subfamily. This sequence in the N-terminal section; belongs to the transient receptor (TC 1.A.4) family. LTrpC subfamily. TRPM6 sub-subfamily. As to quaternary structure, homomers. Forms heteromers with TRPM7; TRPM6 increases the current amplitude of TRPM6/7 heteromers as compared to TRPM7 homomer. Interacts (via kinase domain) with RACK1. Autophosphorylated; autophosphorylation controlls the protein kinase activity of TRPM6 towards their substrates. Autophosphorylation of Thr-1851 in the kinase domain is essential for the inhibitory effect of RACK1. In terms of processing, the C-terminus of TRPM6 is proteolytically cleaved in vivo, in a cell type-specific fashion, releasing the kinase module from the transmembrane domain. The cleaved kinase fragments are translocated to the nucleus to phosphorylate histones and regulate gene expression. In terms of tissue distribution, highly expressed in kidney and colon. Isoform TRPM6a and isoform TRPM6b, are coexpressed with TRPM7 in kidney, and testis, and are also found in several cell lines of lung origin. Isoform TRPM6c is detected only in testis and in NCI-H510A small cell lung carcinoma cells.

Its subcellular location is the cell membrane. It is found in the apical cell membrane. The protein resides in the nucleus. The catalysed reaction is L-seryl-[protein] + ATP = O-phospho-L-seryl-[protein] + ADP + H(+). It catalyses the reaction L-threonyl-[protein] + ATP = O-phospho-L-threonyl-[protein] + ADP + H(+). The enzyme catalyses Mg(2+)(in) = Mg(2+)(out). It carries out the reaction Ca(2+)(in) = Ca(2+)(out). The catalysed reaction is Zn(2+)(in) = Zn(2+)(out). Its activity is regulated as follows. Strongly inhibited by intracellular Mg(2+); unlikely to be active at physiological levels of intracellular Mg(2+). In the heteromeric TRPM6-TRPM7 channels complexes, TRPM7 are able to offset the very high sensitivity of TRPM6 to cytosolic Mg(2+) to physiologically relevant concentrations, whereas TRPM6 relieve TRPM7 from the inhibitory action of Mg-ATP. Consequently, the association of TRPM6 with TRPM7 allow for high constitutive activity of TRPM6/7 in the presence of physiological levels of Mg(2+) and Mg-ATP. The kinase activity is controlled through the autophosphorylation of a serine/threonine-rich region located to the N-terminal of the catalytic domain. Bifunctional protein that combines an ion channel with an intrinsic kinase domain, enabling it to modulate cellular functions either by conducting ions through the pore or by phosphorylating downstream proteins via its kinase domain. Crucial for Mg(2+) homeostasis. Has an important role in epithelial Mg(2+) transport and in the active Mg(2+) absorption in the gut and kidney. However, whether TRPM6 forms functional homomeric channels by itself or functions primarily as a subunit of heteromeric TRPM6-TRPM7 channels, is still under debate. Its function is as follows. The C-terminal kinase domain can be cleaved from the channel segment in a cell-type-specific fashion. The cleaved kinase fragments can translocate to the nucleus, and bind chromatin-remodeling complex proteins to ultimately phosphorylate specific Ser/Thr residues of histones known to be functionally important for cell differentiation and development. In Homo sapiens (Human), this protein is Transient receptor potential cation channel subfamily M member 6 (TRPM6).